The primary structure comprises 528 residues: MNHRHRQEIDRRRTFGIISHPDAGKTTLTEKLLLFGGAIQLAGAVKARKASRHATSDWMAIERERGISVTTSVMKFNYRDFEINLLDTPGHQDFSEDTYRVLTAVDSALMVIDSAKGVEPQTEKLMEVCRMRNTPIITFINKLDREGQSPLALLGEIEDKLQIECTPLSWPIGSGKSFKGVYDLLGKKLHLFAPGQETRTNGGMVFDDLSDAALDELLGRQAVQLREDVELLEGAANPLEQEHYLRGNQTPVFFGSALNNFGVRELLDAFVQMAPPPHARPTVSREVSPYEDQFSGFVFKIQANMDPAHRDRIAFLRICSGKYTRGMKVIHHRAGREMNIANATIFLAQDRTNIDEAYPGDIIGIHNHGTIKIGDTFTEKEPLRFTGIPSFAPEHFRRVILKNPLKVKQLRKGLAQLTEEGAVQVFRPLAARDYILGAVGVLQFDVTVARLRTEYGVDADYEPAGYAAARWVESDSRNVMEEFEKENRGSLALDGEDRLTYLAPNEWRLGFVMEDWPRIRFRKSMECN.

A tr-type G domain is found at 10–278 (DRRRTFGIIS…AFVQMAPPPH (269 aa)). GTP contacts are provided by residues 19 to 26 (SHPDAGKT), 87 to 91 (DTPGH), and 141 to 144 (NKLD).

Belongs to the TRAFAC class translation factor GTPase superfamily. Classic translation factor GTPase family. PrfC subfamily.

Its subcellular location is the cytoplasm. Its function is as follows. Increases the formation of ribosomal termination complexes and stimulates activities of RF-1 and RF-2. It binds guanine nucleotides and has strong preference for UGA stop codons. It may interact directly with the ribosome. The stimulation of RF-1 and RF-2 is significantly reduced by GTP and GDP, but not by GMP. The polypeptide is Peptide chain release factor 3 (Syntrophobacter fumaroxidans (strain DSM 10017 / MPOB)).